A 68-amino-acid polypeptide reads, in one-letter code: uncharacterized protein (68 aa).

To bacterial proteins yidD.

This is an uncharacterized protein from Haemophilus influenzae (Bacteriophage HP1).